The primary structure comprises 764 residues: Protein Lines homolog 1 (764 aa).

2 disordered regions span residues 615-668 (SQSQ…TSLC) and 682-702 (WEEQ…SSPF). The segment covering 645-654 (DSSEASEEET) has biased composition (acidic residues). Residue S650 is modified to Phosphoserine. Polar residues predominate over residues 658–668 (HLANSKQTSLC). Residues 691 to 702 (EPLLSAESSSPF) are compositionally biased toward low complexity.

This sequence belongs to the protein lines family.

The sequence is that of Protein Lines homolog 1 from Mus musculus (Mouse).